The chain runs to 94 residues: Non-specific lipid-transfer protein 1 (94 aa).

Cystine bridges form between Cys-4/Cys-53, Cys-14/Cys-30, Cys-31/Cys-76, and Cys-51/Cys-90.

Functionally, plant non-specific lipid-transfer proteins transfer phospholipids as well as galactolipids across membranes. May play a role in wax or cutin deposition in the cell walls of expanding epidermal cells and certain secretory tissues. The sequence is that of Non-specific lipid-transfer protein 1 from Amaranthus hypochondriacus (Prince-of-Wales feather).